Reading from the N-terminus, the 382-residue chain is Biotin synthase (382 aa).

The Radical SAM core domain occupies 83-318 (CCGNVVDLCS…EQILRYAGGR (236 aa)). Cysteine 101, cysteine 105, and cysteine 108 together coordinate [4Fe-4S] cluster. [2Fe-2S] cluster is bound by residues cysteine 146, cysteine 183, cysteine 243, and arginine 313.

Belongs to the radical SAM superfamily. Biotin synthase family. Homodimer. The cofactor is [4Fe-4S] cluster. [2Fe-2S] cluster is required as a cofactor.

The enzyme catalyses (4R,5S)-dethiobiotin + (sulfur carrier)-SH + 2 reduced [2Fe-2S]-[ferredoxin] + 2 S-adenosyl-L-methionine = (sulfur carrier)-H + biotin + 2 5'-deoxyadenosine + 2 L-methionine + 2 oxidized [2Fe-2S]-[ferredoxin]. It participates in cofactor biosynthesis; biotin biosynthesis; biotin from 7,8-diaminononanoate: step 2/2. In terms of biological role, catalyzes the conversion of dethiobiotin (DTB) to biotin by the insertion of a sulfur atom into dethiobiotin via a radical-based mechanism. This is Biotin synthase from Crocosphaera subtropica (strain ATCC 51142 / BH68) (Cyanothece sp. (strain ATCC 51142)).